The sequence spans 194 residues: dTTP/UTP pyrophosphatase (194 aa).

D73 serves as the catalytic Proton acceptor.

The protein belongs to the Maf family. YhdE subfamily. A divalent metal cation serves as cofactor.

It is found in the cytoplasm. The enzyme catalyses dTTP + H2O = dTMP + diphosphate + H(+). The catalysed reaction is UTP + H2O = UMP + diphosphate + H(+). Its function is as follows. Nucleoside triphosphate pyrophosphatase that hydrolyzes dTTP and UTP. May have a dual role in cell division arrest and in preventing the incorporation of modified nucleotides into cellular nucleic acids. The polypeptide is dTTP/UTP pyrophosphatase (Clostridium botulinum (strain 657 / Type Ba4)).